Here is a 376-residue protein sequence, read N- to C-terminus: Anhydro-N-acetylmuramic acid kinase (376 aa).

Residue 22–29 coordinates ATP; sequence GTSMDGAD.

This sequence belongs to the anhydro-N-acetylmuramic acid kinase family.

It carries out the reaction 1,6-anhydro-N-acetyl-beta-muramate + ATP + H2O = N-acetyl-D-muramate 6-phosphate + ADP + H(+). It participates in amino-sugar metabolism; 1,6-anhydro-N-acetylmuramate degradation. The protein operates within cell wall biogenesis; peptidoglycan recycling. Functionally, catalyzes the specific phosphorylation of 1,6-anhydro-N-acetylmuramic acid (anhMurNAc) with the simultaneous cleavage of the 1,6-anhydro ring, generating MurNAc-6-P. Is required for the utilization of anhMurNAc either imported from the medium or derived from its own cell wall murein, and thus plays a role in cell wall recycling. This Neisseria gonorrhoeae (strain NCCP11945) protein is Anhydro-N-acetylmuramic acid kinase.